Here is a 563-residue protein sequence, read N- to C-terminus: Arginine--tRNA ligase (563 aa).

The short motif at 121-131 (PNIAKPMSMGH) is the 'HIGH' region element.

This sequence belongs to the class-I aminoacyl-tRNA synthetase family. In terms of assembly, monomer.

It is found in the cytoplasm. The catalysed reaction is tRNA(Arg) + L-arginine + ATP = L-arginyl-tRNA(Arg) + AMP + diphosphate. This chain is Arginine--tRNA ligase, found in Leuconostoc citreum (strain KM20).